A 74-amino-acid polypeptide reads, in one-letter code: Protein krueppel (74 aa).

4 C2H2-type zinc fingers span residues E1 to H4, F10 to H32, Y38 to H60, and Y66 to K74.

Belongs to the krueppel C2H2-type zinc-finger protein family.

The protein localises to the nucleus. In terms of biological role, krueppel is a gap class segmentation protein. This chain is Protein krueppel (Kr), found in Musca domestica (House fly).